Here is a 360-residue protein sequence, read N- to C-terminus: Chorismate synthase (360 aa).

2 residues coordinate NADP(+): Arg48 and Arg54. FMN-binding positions include 125–127, 246–247, Gly286, 301–305, and Arg327; these read RSS, NA, and KPTSS.

It belongs to the chorismate synthase family. Homotetramer. FMNH2 serves as cofactor.

The catalysed reaction is 5-O-(1-carboxyvinyl)-3-phosphoshikimate = chorismate + phosphate. It functions in the pathway metabolic intermediate biosynthesis; chorismate biosynthesis; chorismate from D-erythrose 4-phosphate and phosphoenolpyruvate: step 7/7. In terms of biological role, catalyzes the anti-1,4-elimination of the C-3 phosphate and the C-6 proR hydrogen from 5-enolpyruvylshikimate-3-phosphate (EPSP) to yield chorismate, which is the branch point compound that serves as the starting substrate for the three terminal pathways of aromatic amino acid biosynthesis. This reaction introduces a second double bond into the aromatic ring system. In Glaesserella parasuis serovar 5 (strain SH0165) (Haemophilus parasuis), this protein is Chorismate synthase.